Consider the following 320-residue polypeptide: MARAKIALIGAGMIGGTLAHIAAREELGDVILFDIAEGTPQGKALDIAEASAVFGKDVALKGANDYADIAGADVCIVTAGVPRKPGMSRDDLLGINLKVMKAVGEGIKAHAPNAFVICITNPLDAMVWALQQFSGLPKEKVIGMAGVLDSARFAYFLAEATGVSVEDIHAWTLGGHGDDMVPMVRHSTVGGLPLPELVKQGWLSQDKLDAIVERTRKGGGEIVALLKTGSAFYAPAESAIAMATSYLKDKKRVLPCATYLTGQYGLNDLYVGVPVVIGAGGAEKIVEFETNDDEKAMFAKSVESVKGLMEACKAIDSSLV.

Residues G10–G15 and D34 contribute to the NAD(+) site. Residues R83 and R89 each coordinate substrate. Residues N96 and I119–N121 contribute to the NAD(+) site. Substrate contacts are provided by N121 and R152. Catalysis depends on H176, which acts as the Proton acceptor.

The protein belongs to the LDH/MDH superfamily. MDH type 3 family.

It carries out the reaction (S)-malate + NAD(+) = oxaloacetate + NADH + H(+). In terms of biological role, catalyzes the reversible oxidation of malate to oxaloacetate. The chain is Malate dehydrogenase from Caulobacter vibrioides (strain NA1000 / CB15N) (Caulobacter crescentus).